The chain runs to 373 residues: Chaperone protein DnaJ (373 aa).

The J domain occupies 5–69; the sequence is DYYEVLGVNK…NKRANYDQFG (65 aa). A CR-type zinc finger spans residues 130 to 212; the sequence is GTKKEISIKK…CKGKGTENKT (83 aa). Zn(2+)-binding residues include C143, C146, C160, C163, C186, C189, C200, and C203. CXXCXGXG motif repeat units follow at residues 143–150, 160–167, 186–193, and 200–207; these read CHTCNGDG, CSYCNGAG, CPKCEGSG, and CPTCKGKG.

It belongs to the DnaJ family. In terms of assembly, homodimer. Zn(2+) serves as cofactor.

It is found in the cytoplasm. Participates actively in the response to hyperosmotic and heat shock by preventing the aggregation of stress-denatured proteins and by disaggregating proteins, also in an autonomous, DnaK-independent fashion. Unfolded proteins bind initially to DnaJ; upon interaction with the DnaJ-bound protein, DnaK hydrolyzes its bound ATP, resulting in the formation of a stable complex. GrpE releases ADP from DnaK; ATP binding to DnaK triggers the release of the substrate protein, thus completing the reaction cycle. Several rounds of ATP-dependent interactions between DnaJ, DnaK and GrpE are required for fully efficient folding. Also involved, together with DnaK and GrpE, in the DNA replication of plasmids through activation of initiation proteins. The chain is Chaperone protein DnaJ from Staphylococcus epidermidis (strain ATCC 12228 / FDA PCI 1200).